The primary structure comprises 312 residues: MEDFHHISVLPDEVLQALSPRSGGVYVDGTLGGAGHAGLILTASAPDGQLIGFDRDEEAIAVARERLQVFGGRVRIIHRNFAGIAQALAEIGVDGIDGFVLDLGVSSHQLDRDERGFSFMHDAPLDMRMDRSSGQSAADLVNTLPEGELYRIISEYGEERWAKRVASFIVKARDERPIETTLQLVDVIKGSIPKAKWEERLHPATRTFQALRIAVNEELKSLEEGLEGLLSLLKQGGRGAVISFHSLEDRIVKEGFRAAATGCTCPKELPICICGRVPRFKLVTRKPITAGEAEVAANPRSRSAKLRVVEKI.

S-adenosyl-L-methionine is bound by residues 34–36 (AGH), Asp-54, Phe-81, Asp-102, and Gln-109.

Belongs to the methyltransferase superfamily. RsmH family.

The protein localises to the cytoplasm. The enzyme catalyses cytidine(1402) in 16S rRNA + S-adenosyl-L-methionine = N(4)-methylcytidine(1402) in 16S rRNA + S-adenosyl-L-homocysteine + H(+). Functionally, specifically methylates the N4 position of cytidine in position 1402 (C1402) of 16S rRNA. This Citrifermentans bemidjiense (strain ATCC BAA-1014 / DSM 16622 / JCM 12645 / Bem) (Geobacter bemidjiensis) protein is Ribosomal RNA small subunit methyltransferase H.